A 626-amino-acid chain; its full sequence is Protein ALEX (626 aa).

Disordered regions lie at residues 1–29, 173–223, 236–473, and 556–612; these read MMARPVDPQRSPDPTFRSSTRHSGKLEPM, TTAH…AAHP, AAPG…APRS, and AASV…NNSR. Composition is skewed to polar residues over residues 186-195 and 255-270; these read KSTAAASSRQ and GSTTLPSTWTAPQSRL. Basic and acidic residues predominate over residues 281-312; the sequence is QIRESEQRDPQLRRKQQRWKEPLMPRREEKYP. Low complexity predominate over residues 337 to 346; sequence QPILTPGQPQ. Residues 366-399 are compositionally biased toward pro residues; the sequence is IPTPGQPLPPQPIPTPGRPLTPQPIPTPGRPLTP. Residues 416–435 are compositionally biased toward low complexity; sequence RLLRPGQPMSPQLRQTQGLP. The segment covering 436–445 has biased composition (pro residues); sequence LPQPLLPPGQ. The span at 570-579 shows a compositional bias: basic residues; sequence ALSRSRRYPW. Polar residues predominate over residues 600 to 611; it reads RRNAVSSSTNNS.

Belongs to the ALEX family. As to quaternary structure, interacts with the N-terminal region of the XLas isoforms of guanine nucleotide-binding protein G(s) subunit alpha.

It is found in the cell membrane. The protein localises to the cell projection. It localises to the ruffle. In terms of biological role, may inhibit the adenylyl cyclase-stimulating activity of guanine nucleotide-binding protein G(s) subunit alpha which is produced from the same locus in a different open reading frame. This is Protein ALEX from Homo sapiens (Human).